The chain runs to 2078 residues: Nascent polypeptide-associated complex subunit alpha, muscle-specific form (2078 aa).

4 disordered regions span residues 1–21 (MPGEATETVPATEQELPQPQA), 37–96 (ALGQ…LGTA), 595–614 (LGEPLPIGKPASSMTSPLGV), and 732–1944 (KSVP…KAMS). 2 stretches are compositionally biased toward polar residues: residues 9 to 21 (VPATEQELPQPQA) and 60 to 75 (AANQASPFPSPSTIAS). The span at 775 to 786 (SGASATASSKGT) shows a compositional bias: low complexity. Over residues 837 to 847 (PENSLSFQGSK) the composition is skewed to polar residues. S917 carries the post-translational modification Phosphoserine. Positions 933–1020 (SPSPKGAPTP…PPAVTPPSPK (88 aa)) are enriched in pro residues. Positions 1045-1067 (GSPAATPLPKGAPTTPAATLPSP) are enriched in low complexity. A compositionally biased stretch (pro residues) spans 1080–1113 (PTPPAATPPSPKGGPATPSPKGAPMPPAATPPSP). Residues 1114 to 1130 (KGGLATPPHKGAPTTPA) show a composition bias toward low complexity. Composition is skewed to pro residues over residues 1131 to 1147 (ATPPSPKGGLATPPPKG) and 1154 to 1170 (ATPPSPKGGLATPPPKG). S1181 is subject to Phosphoserine. Low complexity-rich tracts occupy residues 1183–1199 (KGGLATPSPKGAPTTPA), 1206–1222 (KGGLATPSPKGAPTTPA), and 1229–1245 (KGGLATPSPKGAPTTPA). 2 stretches are compositionally biased toward pro residues: residues 1246–1270 (ATPPSPKGGPATPPPKGAPTPPAAT) and 1292–1344 (VTPP…PSPK). Residues 1345-1366 (GTPTLPATTPSSKGGPTTPSSK) show a composition bias toward low complexity. S1397 and S1474 each carry phosphoserine. Residues 1470 to 1481 (VTPPSPKEPPAP) are compositionally biased toward pro residues. A compositionally biased stretch (low complexity) spans 1485 to 1507 (ATSSSPKKAPATPAPMGAPTLPA). Pro residues predominate over residues 1611–1625 (KEAPTPPAVTPPSPE). The span at 1626-1637 (KGPATPAPKGTP) shows a compositional bias: low complexity. The segment covering 1647 to 1656 (LKDSPTSPAS) has biased composition (polar residues). Residues 1744-1756 (DSSKTAKGKDASH) are compositionally biased toward basic and acidic residues. Pro residues predominate over residues 1794–1811 (PSPPVSLPLAPSPVPTLP). A PXLXP motif is present at residues 1841 to 1845 (LPLIP). Residues 1876–1891 (SAKQPVTKNNKGSGTE) show a composition bias toward polar residues. The segment covering 1892 to 1905 (SDSDESVPELEEQD) has biased composition (acidic residues). S1906 carries the post-translational modification Phosphoserine; by ILK1. Residues 1907–1920 (TQATTQQAQLAAAA) are compositionally biased toward low complexity. The required for DNA-binding stretch occupies residues 1932-1943 (QSRSEKKARKAM). The NAC-A/B domain occupies 1933-1998 (SRSEKKARKA…AKIEDLSQQA (66 aa)). S1995 carries the phosphoserine modification. At K2005 the chain carries N6-acetyllysine; alternate. Residue K2005 forms a Glycyl lysine isopeptide (Lys-Gly) (interchain with G-Cter in SUMO2); alternate linkage. The residue at position 2022 (T2022) is a Phosphothreonine; by GSK3-beta. T2024 bears the Phosphothreonine mark. Phosphoserine occurs at positions 2029, 2049, 2054, and 2066. Residues 2039–2078 (VEVKDIELVMSQANVSRAKAVRALKNNSNDIVNAIMELTM) enclose the UBA domain.

As to quaternary structure, interacts (via PXLXP motif) with the muscle-restricted histone methyltransferase SMYD1 (via MYND-type zinc finger).

Its subcellular location is the cytoplasm. The protein resides in the nucleus. Its function is as follows. Cardiac- and muscle-specific transcription factor. May act to regulate the expression of genes involved in the development of myotubes. Plays a critical role in ventricular cardiomyocyte expansion and regulates postnatal skeletal muscle growth and regeneration. Involved in the organized assembly of thick and thin filaments of myofibril sarcomeres. This Homo sapiens (Human) protein is Nascent polypeptide-associated complex subunit alpha, muscle-specific form (NACA).